A 223-amino-acid chain; its full sequence is Translation initiation factor 6 (223 aa).

This sequence belongs to the eIF-6 family.

Its function is as follows. Binds to the 50S ribosomal subunit and prevents its association with the 30S ribosomal subunit to form the 70S initiation complex. The sequence is that of Translation initiation factor 6 from Sulfurisphaera tokodaii (strain DSM 16993 / JCM 10545 / NBRC 100140 / 7) (Sulfolobus tokodaii).